We begin with the raw amino-acid sequence, 145 residues long: Ribosome maturation factor RimP (145 aa).

Belongs to the RimP family.

The protein resides in the cytoplasm. Its function is as follows. Required for maturation of 30S ribosomal subunits. The protein is Ribosome maturation factor RimP of Azotobacter vinelandii (strain DJ / ATCC BAA-1303).